Consider the following 340-residue polypeptide: Probable sugar phosphate/phosphate translocator At3g14410 (340 aa).

10 helical membrane-spanning segments follow: residues 12-32, 44-64, 80-100, 110-130, 141-161, 163-183, 197-217, 234-254, 260-282, and 286-305; these read EFVT…QIFF, FPYP…LCFL, LEIY…TLWL, VAFA…LGVA, LLIM…ELNI, WIGV…LIFM, ISLM…PWIF, VVLT…FLVI, LTIR…LLFA, and LTII…AAYN. A disordered region spans residues 320–340; sequence ETPGDAESIPLVSQGNTNTER. A compositionally biased stretch (polar residues) spans 330 to 340; it reads LVSQGNTNTER.

This sequence belongs to the TPT transporter family. TPT (TC 2.A.7.9) subfamily.

It localises to the membrane. The protein is Probable sugar phosphate/phosphate translocator At3g14410 of Arabidopsis thaliana (Mouse-ear cress).